A 204-amino-acid chain; its full sequence is Thiamine-phosphate synthase (204 aa).

Residues 35 to 39 and N67 each bind 4-amino-2-methyl-5-(diphosphooxymethyl)pyrimidine; that span reads QVREK. Residues D68 and D87 each coordinate Mg(2+). Residue S106 participates in 4-amino-2-methyl-5-(diphosphooxymethyl)pyrimidine binding. 132–134 lines the 2-[(2R,5Z)-2-carboxy-4-methylthiazol-5(2H)-ylidene]ethyl phosphate pocket; that stretch reads TPT. A 4-amino-2-methyl-5-(diphosphooxymethyl)pyrimidine-binding site is contributed by K135. 2-[(2R,5Z)-2-carboxy-4-methylthiazol-5(2H)-ylidene]ethyl phosphate contacts are provided by residues G163 and 183 to 184; that span reads VS.

Belongs to the thiamine-phosphate synthase family. Requires Mg(2+) as cofactor.

It carries out the reaction 2-[(2R,5Z)-2-carboxy-4-methylthiazol-5(2H)-ylidene]ethyl phosphate + 4-amino-2-methyl-5-(diphosphooxymethyl)pyrimidine + 2 H(+) = thiamine phosphate + CO2 + diphosphate. The enzyme catalyses 2-(2-carboxy-4-methylthiazol-5-yl)ethyl phosphate + 4-amino-2-methyl-5-(diphosphooxymethyl)pyrimidine + 2 H(+) = thiamine phosphate + CO2 + diphosphate. It catalyses the reaction 4-methyl-5-(2-phosphooxyethyl)-thiazole + 4-amino-2-methyl-5-(diphosphooxymethyl)pyrimidine + H(+) = thiamine phosphate + diphosphate. It functions in the pathway cofactor biosynthesis; thiamine diphosphate biosynthesis; thiamine phosphate from 4-amino-2-methyl-5-diphosphomethylpyrimidine and 4-methyl-5-(2-phosphoethyl)-thiazole: step 1/1. In terms of biological role, condenses 4-methyl-5-(beta-hydroxyethyl)thiazole monophosphate (THZ-P) and 2-methyl-4-amino-5-hydroxymethyl pyrimidine pyrophosphate (HMP-PP) to form thiamine monophosphate (TMP). The protein is Thiamine-phosphate synthase of Vibrio parahaemolyticus serotype O3:K6 (strain RIMD 2210633).